We begin with the raw amino-acid sequence, 236 residues long: 2-C-methyl-D-erythritol 4-phosphate cytidylyltransferase (236 aa).

Belongs to the IspD/TarI cytidylyltransferase family. IspD subfamily.

It catalyses the reaction 2-C-methyl-D-erythritol 4-phosphate + CTP + H(+) = 4-CDP-2-C-methyl-D-erythritol + diphosphate. Its pathway is isoprenoid biosynthesis; isopentenyl diphosphate biosynthesis via DXP pathway; isopentenyl diphosphate from 1-deoxy-D-xylulose 5-phosphate: step 2/6. Its function is as follows. Catalyzes the formation of 4-diphosphocytidyl-2-C-methyl-D-erythritol from CTP and 2-C-methyl-D-erythritol 4-phosphate (MEP). The polypeptide is 2-C-methyl-D-erythritol 4-phosphate cytidylyltransferase (Burkholderia thailandensis (strain ATCC 700388 / DSM 13276 / CCUG 48851 / CIP 106301 / E264)).